The primary structure comprises 322 residues: 4-diphosphocytidyl-2-C-methyl-D-erythritol kinase (322 aa).

The active site involves Lys-18. 130–140 is an ATP binding site; that stretch reads PMGAGLGGGSS. The active site involves Asp-172.

It belongs to the GHMP kinase family. IspE subfamily.

The catalysed reaction is 4-CDP-2-C-methyl-D-erythritol + ATP = 4-CDP-2-C-methyl-D-erythritol 2-phosphate + ADP + H(+). The protein operates within isoprenoid biosynthesis; isopentenyl diphosphate biosynthesis via DXP pathway; isopentenyl diphosphate from 1-deoxy-D-xylulose 5-phosphate: step 3/6. In terms of biological role, catalyzes the phosphorylation of the position 2 hydroxy group of 4-diphosphocytidyl-2C-methyl-D-erythritol. This Psychrobacter arcticus (strain DSM 17307 / VKM B-2377 / 273-4) protein is 4-diphosphocytidyl-2-C-methyl-D-erythritol kinase.